Consider the following 152-residue polypeptide: FAD synthase (152 aa).

Residues 16-17 (TF), 21-24 (HPGH), D101, and Y129 each bind ATP.

This sequence belongs to the archaeal FAD synthase family. In terms of assembly, homodimer. The cofactor is a divalent metal cation.

The catalysed reaction is FMN + ATP + H(+) = FAD + diphosphate. The protein operates within cofactor biosynthesis; FAD biosynthesis; FAD from FMN: step 1/1. Functionally, catalyzes the transfer of the AMP portion of ATP to flavin mononucleotide (FMN) to produce flavin adenine dinucleotide (FAD) coenzyme. This Methanocaldococcus vulcanius (strain ATCC 700851 / DSM 12094 / M7) (Methanococcus vulcanius) protein is FAD synthase.